Consider the following 89-residue polypeptide: Phosphocarrier protein HPr (89 aa).

The HPr domain maps to 1–88; sequence MLQRDTTIIN…ALIANRFGEG (88 aa). The active-site Pros-phosphohistidine intermediate is the histidine 15.

This sequence belongs to the HPr family.

The protein resides in the cytoplasm. General (non sugar-specific) component of the phosphoenolpyruvate-dependent sugar phosphotransferase system (sugar PTS). This major carbohydrate active-transport system catalyzes the phosphorylation of incoming sugar substrates concomitantly with their translocation across the cell membrane. The phosphoryl group from phosphoenolpyruvate (PEP) is transferred to the phosphoryl carrier protein HPr by enzyme I. Phospho-HPr then transfers it to the PTS EIIA domain. This chain is Phosphocarrier protein HPr (phbH), found in Cupriavidus necator (strain ATCC 17699 / DSM 428 / KCTC 22496 / NCIMB 10442 / H16 / Stanier 337) (Ralstonia eutropha).